A 264-amino-acid chain; its full sequence is uncharacterized protein (264 aa).

I8–T15 serves as a coordination point for ATP.

This is an uncharacterized protein from Methanocaldococcus jannaschii (strain ATCC 43067 / DSM 2661 / JAL-1 / JCM 10045 / NBRC 100440) (Methanococcus jannaschii).